The primary structure comprises 69 residues: DNA gyrase inhibitor YacG (69 aa).

Zn(2+) is bound by residues cysteine 13, cysteine 16, cysteine 32, and cysteine 36.

This sequence belongs to the DNA gyrase inhibitor YacG family. As to quaternary structure, interacts with GyrB. The cofactor is Zn(2+).

In terms of biological role, inhibits all the catalytic activities of DNA gyrase by preventing its interaction with DNA. Acts by binding directly to the C-terminal domain of GyrB, which probably disrupts DNA binding by the gyrase. This is DNA gyrase inhibitor YacG from Neisseria meningitidis serogroup A / serotype 4A (strain DSM 15465 / Z2491).